Here is a 383-residue protein sequence, read N- to C-terminus: MKAGKSERERSGRRRHRSGDALTTVVVKQERLSPEPVAHRRPDAPAASLSPPAAEPGHSGHRGSRARSPAKKKSKSSGRRSKSPRTKRSQSPHYPMVKVKQEREDHPRRGREDRQHREPSEQEHRRARNSERDRHRGHSRQGRSSDERPVSGQDRDRDSQNLQAQEEERDFHNARRREHRQQNESAGSEAQEVIPRPAGNRSKEVPVKEKPSFELSGALLEDTNTFRGVVIKYSEPPEARIPKKRWRLYPFKNDEVLPVMYIHRQSAYLLGRHRRIADIPIDHPSCSKQHAVFQYRLVEYTRADGTVGRRVKPYIIDLGSGNGTFLNNKRIEPQRYYELKEKDVLKFGFSSREYVLLHESSDTSELDRKEDEDDEEEEMVSDS.

A compositionally biased stretch (basic and acidic residues) spans 1 to 10 (MKAGKSERER). Positions 1–209 (MKAGKSERER…NRSKEVPVKE (209 aa)) are disordered. Position 18 is a phosphoserine (serine 18). Residue lysine 28 forms a Glycyl lysine isopeptide (Lys-Gly) (interchain with G-Cter in SUMO); alternate linkage. Residue lysine 28 forms a Glycyl lysine isopeptide (Lys-Gly) (interchain with G-Cter in SUMO1); alternate linkage. Lysine 28 is covalently cross-linked (Glycyl lysine isopeptide (Lys-Gly) (interchain with G-Cter in SUMO2); alternate). Basic and acidic residues predominate over residues 28-43 (KQERLSPEPVAHRRPD). 3 positions are modified to phosphoserine: serine 33, serine 48, and serine 50. Over residues 44–56 (APAASLSPPAAEP) the composition is skewed to low complexity. Positions 59–90 (SGHRGSRARSPAKKKSKSSGRRSKSPRTKRSQ) are enriched in basic residues. Serine 91 is subject to Phosphoserine. Basic and acidic residues-rich tracts occupy residues 99–134 (VKQE…ERDR) and 143–159 (RSSD…DRDS). A Glycyl lysine isopeptide (Lys-Gly) (interchain with G-Cter in SUMO2) cross-link involves residue lysine 100. Serine 145 is subject to Phosphoserine. The stretch at 153 to 194 (QDRDRDSQNLQAQEEERDFHNARRREHRQQNESAGSEAQEVI) forms a coiled coil. A Glycyl lysine isopeptide (Lys-Gly) (interchain with G-Cter in SUMO2) cross-link involves residue lysine 210. Positions 268-331 (YLLGRHRRIA…NGTFLNNKRI (64 aa)) constitute an FHA domain. Over residues 359–369 (ESSDTSELDRK) the composition is skewed to basic and acidic residues. The segment at 359–383 (ESSDTSELDRKEDEDDEEEEMVSDS) is disordered. Residues 370–383 (EDEDDEEEEMVSDS) are compositionally biased toward acidic residues. Phosphoserine is present on serine 381.

Component of activated spliceosome complexes. Binds SMAD4 and CREBBP/EP300. Component of the minor spliceosome, which splices U12-type introns. Binds the SMAD1/OAZ1/PSMB4 complex. Interacts with DROSHA and SMARCA4. Component of the SNARP complex which consists at least of SNIP1, SNW1, THRAP3, BCLAF1 and PNN. In terms of processing, degraded by the proteasome upon binding to the SMAD1/OAZ1/PSMB4 complex.

It is found in the nucleus. Functionally, required for pre-mRNA splicing as component of the spliceosome. As a component of the minor spliceosome, involved in the splicing of U12-type introns in pre-mRNAs. Down-regulates NF-kappa-B signaling by competing with RELA for CREBBP/EP300 binding. Involved in the microRNA (miRNA) biogenesis. May be involved in cyclin-D1/CCND1 mRNA stability through the SNARP complex which associates with both the 3'end of the CCND1 gene and its mRNA. This is Smad nuclear-interacting protein 1 (Snip1) from Mus musculus (Mouse).